The chain runs to 719 residues: Glutathionylspermidine synthase (719 aa).

In terms of domain architecture, Peptidase C51 spans 54-200; it reads CLPLSSFERK…TESGEVELLD (147 aa). Position 350 (Arg-350) interacts with glutathione. 350 to 352 contacts ATP; the sequence is RFD. Positions 352, 364, and 366 each coordinate Mg(2+). Position 369 (Ser-369) interacts with glutathione. Glu-432 provides a ligand contact to spermidine. Residues Glu-433 and Thr-501 each contribute to the glutathione site. ATP-binding positions include Lys-544, Lys-579, Gly-586, Gln-653, and 689-691; that span reads KIT.

It in the C-terminal section; belongs to the glutathionylspermidine synthase preATP-grasp family. Mg(2+) is required as a cofactor. Post-translationally, the N-terminus is blocked.

It carries out the reaction spermidine + glutathione + ATP = glutathionylspermidine + ADP + phosphate + H(+). Conjugates glutathione (gamma-Glu-Cys-Gly) and spermidine to form glutathionylspermidine in the biosynthesis trypanothione (N(1),N(8)-bis(glutathionyl)spermidine), which is involved in maintaining intracellular thiol redox and in defense against oxidants. This chain is Glutathionylspermidine synthase (GSP), found in Crithidia fasciculata.